A 411-amino-acid polypeptide reads, in one-letter code: G2/mitotic-specific cyclin cig2 (411 aa).

A Destruction box motif is present at residues 51–60; sequence RTVLSDVSNV. The disordered stretch occupies residues 57–89; the sequence is VSNVGKNNADEKDTKKAKRSFDESNLSTNEEAD. Over residues 64–78 the composition is skewed to basic and acidic residues; sequence NADEKDTKKAKRSFD. The region spanning 139-265 is the Cyclin N-terminal domain; that stretch reads EIFEYIRKLD…MLNVLNFDLS (127 aa). The interval 181 to 273 is interaction with pop1; that stretch reads SNFCLMPETL…LSYPSPLNFL (93 aa).

This sequence belongs to the cyclin family. Cyclin AB subfamily. As to quaternary structure, associates with cdc2, res2 and rum1. Interacts with pop1 only when phosphorylated. Phosphorylated.

Its subcellular location is the nucleus. It is found in the cytoplasm. The protein localises to the cytoskeleton. It localises to the microtubule organizing center. The protein resides in the spindle pole body. Functionally, essential for the control of the cell cycle at the G2/M and G1/S (mitosis) transition. Interacts with the cdc2 protein kinase to form MPF. Interaction with res2 promotes the phosphorylation of res1 and inhibits MBF-dependent gene transcription. Forms an autoregulating feedback-inhibition loop with MBF which is important for normal regulation of the cell cycle. G2/M cyclins accumulate steadily during G2 and are abruptly destroyed at mitosis. Negatively regulates conjugation via interacting with cell cycle 'start' genes. Degraded by skp1, pop1 and pop2 in the G2 and M phases of the cell cycle. This is G2/mitotic-specific cyclin cig2 (cig2) from Schizosaccharomyces pombe (strain 972 / ATCC 24843) (Fission yeast).